Reading from the N-terminus, the 299-residue chain is Methionine aminopeptidase (299 aa).

H64 is a substrate binding site. A divalent metal cation is bound by residues D84, D95, and H158. H166 serves as a coordination point for substrate. The a divalent metal cation site is built by E191 and E284.

Belongs to the peptidase M24A family. Methionine aminopeptidase archaeal type 2 subfamily. In terms of assembly, monomer. Requires Co(2+) as cofactor. Zn(2+) serves as cofactor. Mn(2+) is required as a cofactor. The cofactor is Fe(2+).

It carries out the reaction Release of N-terminal amino acids, preferentially methionine, from peptides and arylamides.. Its function is as follows. Removes the N-terminal methionine from nascent proteins. The N-terminal methionine is often cleaved when the second residue in the primary sequence is small and uncharged (Met-Ala-, Cys, Gly, Pro, Ser, Thr, or Val). This Methanothermobacter thermautotrophicus (strain ATCC 29096 / DSM 1053 / JCM 10044 / NBRC 100330 / Delta H) (Methanobacterium thermoautotrophicum) protein is Methionine aminopeptidase.